A 350-amino-acid chain; its full sequence is Methylthioribose-1-phosphate isomerase (350 aa).

Substrate contacts are provided by residues arginine 47–alanine 49, arginine 89, and glutamine 196. Catalysis depends on aspartate 237, which acts as the Proton donor. Asparagine 247–lysine 248 lines the substrate pocket.

The protein belongs to the eIF-2B alpha/beta/delta subunits family. MtnA subfamily.

The catalysed reaction is 5-(methylsulfanyl)-alpha-D-ribose 1-phosphate = 5-(methylsulfanyl)-D-ribulose 1-phosphate. It participates in amino-acid biosynthesis; L-methionine biosynthesis via salvage pathway; L-methionine from S-methyl-5-thio-alpha-D-ribose 1-phosphate: step 1/6. Catalyzes the interconversion of methylthioribose-1-phosphate (MTR-1-P) into methylthioribulose-1-phosphate (MTRu-1-P). The protein is Methylthioribose-1-phosphate isomerase of Nitratidesulfovibrio vulgaris (strain DSM 19637 / Miyazaki F) (Desulfovibrio vulgaris).